Reading from the N-terminus, the 124-residue chain is Large ribosomal subunit protein uL18 (124 aa).

The protein belongs to the universal ribosomal protein uL18 family. Part of the 50S ribosomal subunit; part of the 5S rRNA/L5/L18/L25 subcomplex. Contacts the 5S and 23S rRNAs.

In terms of biological role, this is one of the proteins that bind and probably mediate the attachment of the 5S RNA into the large ribosomal subunit, where it forms part of the central protuberance. The polypeptide is Large ribosomal subunit protein uL18 (Aquifex pyrophilus).